Here is a 433-residue protein sequence, read N- to C-terminus: Pyrimidine-nucleoside phosphorylase (433 aa).

81–83 is a phosphate binding site; the sequence is KHS. Gly-88 and Thr-90 together coordinate K(+). Residues Thr-92, 108–110, and Thr-120 each bind phosphate; that span reads KMS. Arg-168 and Lys-187 together coordinate substrate. K(+)-binding residues include Leu-243, Ala-246, and Glu-255.

Belongs to the thymidine/pyrimidine-nucleoside phosphorylase family. Homodimer. It depends on K(+) as a cofactor.

It carries out the reaction uridine + phosphate = alpha-D-ribose 1-phosphate + uracil. The enzyme catalyses thymidine + phosphate = 2-deoxy-alpha-D-ribose 1-phosphate + thymine. It catalyses the reaction 2'-deoxyuridine + phosphate = 2-deoxy-alpha-D-ribose 1-phosphate + uracil. In terms of biological role, catalyzes phosphorolysis of the pyrimidine nucleosides uridine, thymidine and 2'-deoxyuridine with the formation of the corresponding pyrimidine base and ribose-1-phosphate. This chain is Pyrimidine-nucleoside phosphorylase (pdp), found in Staphylococcus aureus (strain bovine RF122 / ET3-1).